The sequence spans 166 residues: Urease accessory protein UreE 2 (166 aa).

A disordered region spans residues 133-156 (QPEHGAYGGGHHHSRAGEEDFNYP).

The protein belongs to the UreE family.

Its subcellular location is the cytoplasm. Functionally, involved in urease metallocenter assembly. Binds nickel. Probably functions as a nickel donor during metallocenter assembly. The sequence is that of Urease accessory protein UreE 2 from Pseudomonas syringae pv. tomato (strain ATCC BAA-871 / DC3000).